Here is a 372-residue protein sequence, read N- to C-terminus: uncharacterized protein (372 aa).

In terms of domain architecture, PNPLA spans 38 to 270 (FFIEGGGTKG…ANNIPLDYLI (233 aa)). Positions 42-47 (GGGTKG) match the GXGXXG motif. The short motif at 74 to 78 (GTSVG) is the GXSXG element. S76 functions as the Nucleophile in the catalytic mechanism. The Proton acceptor role is filled by D257. A DGA/G motif is present at residues 257 to 259 (DGG).

Functionally, probable lipid hydrolase. This is an uncharacterized protein from Acanthamoeba polyphaga (Amoeba).